Reading from the N-terminus, the 255-residue chain is tRNA (guanine-N(1)-)-methyltransferase (255 aa).

S-adenosyl-L-methionine-binding positions include glycine 114 and 134 to 139 (IGDYIL).

This sequence belongs to the RNA methyltransferase TrmD family. In terms of assembly, homodimer.

The protein resides in the cytoplasm. The enzyme catalyses guanosine(37) in tRNA + S-adenosyl-L-methionine = N(1)-methylguanosine(37) in tRNA + S-adenosyl-L-homocysteine + H(+). Specifically methylates guanosine-37 in various tRNAs. This is tRNA (guanine-N(1)-)-methyltransferase from Blochmanniella pennsylvanica (strain BPEN).